The following is a 381-amino-acid chain: Queuine tRNA-ribosyltransferase (381 aa).

D96 acts as the Proton acceptor in catalysis. Substrate-binding positions include 96-100 (DSGGF), D150, Q193, and G220. An RNA binding region spans residues 251-257 (GVGAPDS). Residue D270 is the Nucleophile of the active site. Residues 275 to 279 (TRIAR) form an RNA binding; important for wobble base 34 recognition region. Zn(2+) is bound by residues C308, C310, C313, and H339.

Belongs to the queuine tRNA-ribosyltransferase family. As to quaternary structure, homodimer. Within each dimer, one monomer is responsible for RNA recognition and catalysis, while the other monomer binds to the replacement base PreQ1. Zn(2+) is required as a cofactor.

The catalysed reaction is 7-aminomethyl-7-carbaguanine + guanosine(34) in tRNA = 7-aminomethyl-7-carbaguanosine(34) in tRNA + guanine. It functions in the pathway tRNA modification; tRNA-queuosine biosynthesis. Its function is as follows. Catalyzes the base-exchange of a guanine (G) residue with the queuine precursor 7-aminomethyl-7-deazaguanine (PreQ1) at position 34 (anticodon wobble position) in tRNAs with GU(N) anticodons (tRNA-Asp, -Asn, -His and -Tyr). Catalysis occurs through a double-displacement mechanism. The nucleophile active site attacks the C1' of nucleotide 34 to detach the guanine base from the RNA, forming a covalent enzyme-RNA intermediate. The proton acceptor active site deprotonates the incoming PreQ1, allowing a nucleophilic attack on the C1' of the ribose to form the product. After dissociation, two additional enzymatic reactions on the tRNA convert PreQ1 to queuine (Q), resulting in the hypermodified nucleoside queuosine (7-(((4,5-cis-dihydroxy-2-cyclopenten-1-yl)amino)methyl)-7-deazaguanosine). This Enterococcus faecalis (strain ATCC 700802 / V583) protein is Queuine tRNA-ribosyltransferase.